We begin with the raw amino-acid sequence, 1889 residues long: MACCHKVMLLVDTAGVSAPHSPARRAALRLLTYLSCRFGLARVHWTFKFFDSQGARSRPSRVSDFRELGSRSWEDFEEELEARLGDRPPGAHLPGPTPRATHTHGALMETLLDYQWDRPEITSPTKPILRSSGRRLLDADGEAREAQAALGGFGNAVFLLAPCPHSQRELLQFVSGCEAQAQRVPLTPKQVMEKVLPKRVQEVMIARNITLYWVDTTERSKLWASPDHVGYWTVCELLHHGGGTILPAETWSLGFTKARETVLPCGGELSHKPHPSPWISALPIDATVNCLLYNSEYEASFPRIEGTLFLPVQGKEIEETWAISLEPLAMHQRHFQKPVRIVLRGSVAQWSLPVSSALGTDSWMLQSPEEHRSTQRLLFQELVSRLTAEEFHLVASVDPGEGWPPITGIISPFSANAMILTVFRAKEAEFQSHFLQTAATEGSQDTASLFSDVVDSVLNQSHNLFEDPASSAPCVPEWVQQELSHTSSWSPALVEKWFPFSNASGATSDLMESFWLLHAASPDNDESSKTESELTRCLSELYQRSHEESTVVNQERSRKKRGIPRTPVRQKMNTMSRSLKMLNVARLNVKAQKLHPDGSPDTAVEKGLQKAVIGRTADKLEDRGRILRSSKLKEFKTEEELLAYIHDNYQKAVATEEITLYSCAQNMVSTIKMFLKSKDIKELEVACLSHVNSNLLKTSKTLRQNLAGKMDTEDKVGECQLQVFLRLEMCEQCPSVLDRPDEVERIVEEVTDLLRLVCLTKDSAYLSEFLEEILRLYIGSIPGTIGQLYHSLGLKIPQKLAGVLPTGFFSDDSMSQESMSPPPSSSTHRSVSAITESEQLEELRTRSAKKRRKNALIRHKSIAEISQTLRQIEVPKVSKRATRNENSHSASIQLPVPRKDTIQEVTKVRRNLFNQEMLSPSKRGLKKGLPRSHSVSALECLHHKQDKFKKTKSSTFQGYCKLLTKSVAETPVHKQISRRLLHRQIKGRSSDPGPDIHVVEESPEKEDEMTLRRSPRIKQLSFSRTNSGSFYSVSQPKSRSVQRIHSSQQESEQRENFPVQSIQSPKTLLFGALSEIPSSSKKGSAQIKRSLRSMLDSEISTSYETPKKSNQKSPSFSKTTPRRFPRTAQTLLYTPERLQNSPTEMTSAEGTISEATIKTPSSHGYNSPFASKVTSQKTVSPAKEETSPPLTKLPSTPRESDVQPPQCSSDCTWPHSVNSSPEGPYYPASPPPMAGQARSQCLTPIRYSFRTPPRTALAGTSKQQEHQELPLPRASQTQEPPQGLEKKALKIPKKPAHTSTSPLSPEEHYSGCDVSPHQPRNSLSASPPPGELNWKEHQTSPSVTSSVSCPVPSTPPRTPQRMTCPIPPSPPSKLRRSCRKKSCPPQDFPECHPGPSAAPVLSSATSPGAVTGSREEQSQFSEGQSYLGTGFRSDCHVSSPVLTASDTKCLPLIDEAQLHGLKNQEVKSGILPGEEGEEPESTIADELPSVSDPGILVPAPSSVSSSSELLPYPLCCTADGKQRQDAAQQGSPRASEATSSPQTYEVELEMQASGLPKLRIKKIDPGVLLEAEALGKEAPLGEEGALPALCMPKASKSSGRTEHPYLSPPCLRPSHSTPGKNGGQTFICQSCTPSRCPPSTPSPFQADAGVSWTPSPKQSGKTTPEIIKDWPRRKRAVDCSAGPSAGRGEASMDLPGSLSLLEPEPEGKERSLEQDLSKVLISEEFELEGVCQLPDQSPPKDSASVTEETSWGQFGLGRKRFLSAKEESEYKVKRVCDSLSEDPQASKQKECSPRWSALPLHSVGDDEVFVSGSTPPSGCMVRSCLSASGLQALTQSPLLFQGRTPSSHSTDTRDEEVDVFPSTAEESPFSHTLSRKRPFRTYTRKKLIS.

Phosphoserine is present on residues Ser-295, Ser-599, Ser-820, Ser-861, Ser-919, Ser-934, Ser-1002, Ser-1027, and Ser-1078. Residues 812–832 are compositionally biased toward low complexity; that stretch reads DSMSQESMSPPPSSSTHRSVS. The disordered stretch occupies residues 812–836; the sequence is DSMSQESMSPPPSSSTHRSVSAITE. Residues 979–1063 are disordered; it reads RLLHRQIKGR…RENFPVQSIQ (85 aa). The span at 1020 to 1050 shows a compositional bias: polar residues; sequence LSFSRTNSGSFYSVSQPKSRSVQRIHSSQQE. Disordered stretches follow at residues 1098–1421, 1471–1508, 1520–1543, 1630–1714, 1730–1751, and 1841–1875; these read EIST…SQFS, LPGE…SSSE, GKQR…SPQT, SCTP…SLEQ, VCQL…ETSW, and QGRT…TLSR. Over residues 1127-1179 the composition is skewed to polar residues; the sequence is TAQTLLYTPERLQNSPTEMTSAEGTISEATIKTPSSHGYNSPFASKVTSQKTV. Phosphothreonine is present on Thr-1134. Residue Ser-1141 is modified to Phosphoserine. A compositionally biased stretch (low complexity) spans 1187-1197; sequence SPPLTKLPSTP. The segment covering 1203–1219 has biased composition (polar residues); the sequence is QPPQCSSDCTWPHSVNS. The segment covering 1339–1351 has biased composition (low complexity); it reads TSPSVTSSVSCPV. Over residues 1373–1382 the composition is skewed to basic residues; it reads KLRRSCRKKS. At Ser-1406 the chain carries Phosphoserine. Positions 1496–1508 are enriched in low complexity; it reads LVPAPSSVSSSSE. 2 stretches are compositionally biased toward polar residues: residues 1525 to 1543 and 1652 to 1662; these read DAAQ…SPQT and WTPSPKQSGKT. Residues 1705 to 1714 are compositionally biased toward basic and acidic residues; sequence PEGKERSLEQ.

Belongs to the treslin family. In terms of assembly, interacts with TOPBP1 (via BRCT domains); interaction takes place in a CDK2-dependent manner. Component of the replisome complex composed of at least DONSON, MCM2, MCM7, PCNA and TICRR.

It is found in the nucleus. Regulator of DNA replication and S/M and G2/M checkpoints. Regulates the triggering of DNA replication initiation via its interaction with TOPBP1 by participating in CDK2-mediated loading of CDC45L onto replication origins. Required for the transition from pre-replication complex (pre-RC) to pre-initiation complex (pre-IC). Required to prevent mitotic entry after treatment with ionizing radiation. In Mus musculus (Mouse), this protein is Treslin (Ticrr).